Here is a 400-residue protein sequence, read N- to C-terminus: MAPPNTIDAGLTQRHISTSAAPTSAKPAFERNYQLPEFTIKEIRECIPAHCFERSGLRGLCHVAIDLTWASLLFLAATQIDKFENPLIRYLAWPAYWIMQGIVCTGIWVLAHECGHQSFSTSKTLNNTVGWILHSMLLVPYHSWRISHSKHHKATGHMTKDQVFVPKTRSQVGLPPKENAAAAVQEEDMSVHLDEEAPIVTLFWMVIQFLFGWPAYLIMNASGQDYGRWTSHFHTYSPIFEPRNFFDIIISDLGVLAALGALIYASMQLSLLTVTKYYIVPYLFVNFWLVLITFLQHTDPKLPHYREGAWNFQRGALCTVDRSFGKFLDHMFHGIVHTHVAHHLFSQMPFYHAEEATYHLKKLLGEYYVYDPSPIVVAVWRSFRECRFVEDHGDVVFFKK.

Residues 91–111 form a helical membrane-spanning segment; that stretch reads LAWPAYWIMQGIVCTGIWVLA. The Histidine box-1 motif lies at 112 to 116; it reads HECGH. The Histidine box-2 signature appears at 148-152; that stretch reads HSKHH. A run of 3 helical transmembrane segments spans residues 199–219, 245–265, and 277–297; these read IVTL…YLIM, FFDI…LIYA, and YYIV…FLQH. Positions 339–343 match the Histidine box-3 motif; sequence HVAHH.

This sequence belongs to the fatty acid desaturase type 1 family.

The protein localises to the membrane. The enzyme catalyses (9Z)-octadecenoyl-CoA + 2 Fe(II)-[cytochrome b5] + O2 + 2 H(+) = (9Z,12Z)-octadecadienoyl-CoA + 2 Fe(III)-[cytochrome b5] + 2 H2O. It carries out the reaction (9Z)-hexadecenoyl-CoA + 2 Fe(II)-[cytochrome b5] + O2 + 2 H(+) = (9Z,12Z)-hexadecadienoyl-CoA + 2 Fe(III)-[cytochrome b5] + 2 H2O. It functions in the pathway lipid metabolism; polyunsaturated fatty acid biosynthesis. Its function is as follows. Catalyzes the desaturation of oleic acid (Delta(9)-18:1) to linoleic acid (Delta(9), Delta(12)-18:2). This chain is Delta(12) fatty acid desaturase, found in Mortierella alpina (Oleaginous fungus).